A 1238-amino-acid chain; its full sequence is DNA-directed RNA polymerase subunit beta (1238 aa).

Residues 1186–1238 are disordered; sequence IEGREDTPPEEVYEEGYEEGFEEESEELPEDIDFEPDSFDIENDDLDLEDFDI. The segment covering 1193 to 1238 has biased composition (acidic residues); the sequence is PPEEVYEEGYEEGFEEESEELPEDIDFEPDSFDIENDDLDLEDFDI.

It belongs to the RNA polymerase beta chain family. In terms of assembly, the RNAP catalytic core consists of 2 alpha, 1 beta, 1 beta' and 1 omega subunit. When a sigma factor is associated with the core the holoenzyme is formed, which can initiate transcription.

The catalysed reaction is RNA(n) + a ribonucleoside 5'-triphosphate = RNA(n+1) + diphosphate. DNA-dependent RNA polymerase catalyzes the transcription of DNA into RNA using the four ribonucleoside triphosphates as substrates. The sequence is that of DNA-directed RNA polymerase subunit beta from Thermoanaerobacter sp. (strain X514).